The following is a 207-amino-acid chain: Probable nicotinate-nucleotide adenylyltransferase (207 aa).

Belongs to the NadD family.

The catalysed reaction is nicotinate beta-D-ribonucleotide + ATP + H(+) = deamido-NAD(+) + diphosphate. It functions in the pathway cofactor biosynthesis; NAD(+) biosynthesis; deamido-NAD(+) from nicotinate D-ribonucleotide: step 1/1. Catalyzes the reversible adenylation of nicotinate mononucleotide (NaMN) to nicotinic acid adenine dinucleotide (NaAD). In Synechococcus sp. (strain JA-3-3Ab) (Cyanobacteria bacterium Yellowstone A-Prime), this protein is Probable nicotinate-nucleotide adenylyltransferase.